Reading from the N-terminus, the 225-residue chain is E3 ubiquitin-protein ligase ATL76 (225 aa).

The helical transmembrane segment at 59-79 (LMLLSVLICGIICCLGLHYII) threads the bilayer. Residues 135 to 177 (CVICLSDFVSGEQLRLLPKCNHGFHVRCIDKWLQHHLTCPKCR) form an RING-type; atypical zinc finger.

Belongs to the RING-type zinc finger family. ATL subfamily.

Its subcellular location is the membrane. The catalysed reaction is S-ubiquitinyl-[E2 ubiquitin-conjugating enzyme]-L-cysteine + [acceptor protein]-L-lysine = [E2 ubiquitin-conjugating enzyme]-L-cysteine + N(6)-ubiquitinyl-[acceptor protein]-L-lysine.. Its pathway is protein modification; protein ubiquitination. In terms of biological role, E3 ubiquitin-protein ligase able to catalyze polyubiquitination with ubiquitin-conjugating enzyme E2 UBC8 in vitro. The sequence is that of E3 ubiquitin-protein ligase ATL76 (ATL76) from Arabidopsis thaliana (Mouse-ear cress).